A 199-amino-acid polypeptide reads, in one-letter code: Melanocortin-2 receptor accessory protein 2B (199 aa).

Residue Asn-6 is glycosylated (N-linked (GlcNAc...) asparagine). The helical transmembrane segment at 39-59 (IVIGFWVGLAVFVIFMFFVLT) threads the bilayer.

It belongs to the MRAP family. As to quaternary structure, interacts with mc4r. As to expression, expressed in adult brain.

The protein resides in the cell membrane. Its subcellular location is the endoplasmic reticulum membrane. Activator of melanocortin receptor 4 (mc4r), a receptor involved in energy homeostasis. Plays a role after larval development in the control of energy homeostasis and body weight regulation by increasing ligand-sensitivity of mc4r and mc4r-mediated generation of cAMP once the zebrafish begins feeding, increasing the capacity for regulated feeding and growth. In Danio rerio (Zebrafish), this protein is Melanocortin-2 receptor accessory protein 2B (mrap2b).